A 567-amino-acid polypeptide reads, in one-letter code: Urease subunit alpha (567 aa).

The Urease domain maps to 129–567 (GGVDTHIHFI…LPMAQRYFLF (439 aa)). Positions 134, 136, and 217 each coordinate Ni(2+). The residue at position 217 (Lys217) is an N6-carboxylysine. His219 is a substrate binding site. Ni(2+) contacts are provided by His246 and His272. Residue His320 is the Proton donor of the active site. Residue Asp360 coordinates Ni(2+).

Belongs to the metallo-dependent hydrolases superfamily. Urease alpha subunit family. In terms of assembly, heterotrimer of UreA (gamma), UreB (beta) and UreC (alpha) subunits. Three heterotrimers associate to form the active enzyme. Ni cation serves as cofactor. Post-translationally, carboxylation allows a single lysine to coordinate two nickel ions.

Its subcellular location is the cytoplasm. The catalysed reaction is urea + 2 H2O + H(+) = hydrogencarbonate + 2 NH4(+). The protein operates within nitrogen metabolism; urea degradation; CO(2) and NH(3) from urea (urease route): step 1/1. The protein is Urease subunit alpha of Proteus hauseri.